An 810-amino-acid chain; its full sequence is Coiled-coil domain-containing protein 15 (810 aa).

3 coiled-coil regions span residues 65 to 89 (VVEE…RQVR), 160 to 189 (DGEN…SFKT), and 638 to 669 (MDIE…EQQR).

Interacts with POC5, POC1B, CETN2 and FAM161A.

Its subcellular location is the cytoplasm. It is found in the cytoskeleton. It localises to the microtubule organizing center. The protein resides in the centrosome. The protein localises to the centriole. Its subcellular location is the centriolar satellite. Functionally, plays an important role in primary cilium assembly, maintenance, and length regulation. Interacts with centriole inner scaffold proteins to promote proper centriole size and integrity and assembly of functional cilia. Required for the recruitment of both the inner scaffold protein POC1B and the distal SFI1/CETN2 complex to centrioles. This is Coiled-coil domain-containing protein 15 (Ccdc15) from Mus musculus (Mouse).